Reading from the N-terminus, the 351-residue chain is Glycerol-1-phosphate dehydrogenase [NAD(P)+] (351 aa).

NAD(+) is bound by residues 97–101 (GKVID) and 119–122 (TSPS). Residue aspartate 124 participates in substrate binding. Position 128 (serine 128) interacts with NAD(+). Position 171 (aspartate 171) interacts with substrate. Residues aspartate 171 and histidine 251 each coordinate Zn(2+). Histidine 255 contributes to the substrate binding site. Histidine 267 is a Zn(2+) binding site.

This sequence belongs to the glycerol-1-phosphate dehydrogenase family. In terms of assembly, homodimer. Zn(2+) is required as a cofactor.

It is found in the cytoplasm. The catalysed reaction is sn-glycerol 1-phosphate + NAD(+) = dihydroxyacetone phosphate + NADH + H(+). It carries out the reaction sn-glycerol 1-phosphate + NADP(+) = dihydroxyacetone phosphate + NADPH + H(+). The protein operates within membrane lipid metabolism; glycerophospholipid metabolism. Functionally, catalyzes the NAD(P)H-dependent reduction of dihydroxyacetonephosphate (DHAP or glycerone phosphate) to glycerol 1-phosphate (G1P). The G1P thus generated is used as the glycerophosphate backbone of phospholipids in the cellular membranes of Archaea. The chain is Glycerol-1-phosphate dehydrogenase [NAD(P)+] from Saccharolobus islandicus (strain M.16.27) (Sulfolobus islandicus).